Reading from the N-terminus, the 701-residue chain is Aryl hydrocarbon receptor repressor (701 aa).

The bHLH domain maps to 25–78; that stretch reads TMGAEKSNPSKRHRDRLNTELDHLASLLPFSPDIISKLDKLSVLRLSVSYLRVK. The PAS domain occupies 106 to 176; it reads PVQEGRLLLE…RQLHWAMDPP (71 aa). Polar residues predominate over residues 409–430; that stretch reads TEQRSQESTTKLTRQPSKNEPS. The interval 409 to 432 is disordered; the sequence is TEQRSQESTTKLTRQPSKNEPSTC. The segment at 555–701 is needed for transcriptional repression; that stretch reads ASTTSCLWLG…SKGSDGIFLP (147 aa). Residues lysine 583 and lysine 660 each participate in a glycyl lysine isopeptide (Lys-Gly) (interchain with G-Cter in SUMO2) cross-link.

In terms of assembly, interacts with ARNT, ANKRA2, HDAC4 and HDAC5. Interacts with ARNT; forms a heterodimer with ARNT.

The protein localises to the cytoplasm. It localises to the nucleus. In terms of biological role, mediates dioxin toxicity and is involved in regulation of cell growth and differentiation. Represses the transcription activity of AHR by competing with this transcription factor for heterodimer formation with the ARNT and subsequently binding to the xenobiotic response element (XRE) sequence present in the promoter regulatory region of variety of genes. Represses CYP1A1 by binding the XRE sequence and recruiting ANKRA2, HDAC4 and/or HDAC5. Autoregulates its expression by associating with its own XRE site. This Mus musculus (Mouse) protein is Aryl hydrocarbon receptor repressor (Ahrr).